We begin with the raw amino-acid sequence, 138 residues long: Protein FAM136A (138 aa).

A2 carries the N-acetylalanine modification. Residues T124 and T126 each carry the phosphothreonine modification.

It belongs to the FAM136 family.

The protein is Protein FAM136A (Fam136a) of Mus musculus (Mouse).